A 681-amino-acid chain; its full sequence is Angiomotin-like 2b (681 aa).

A compositionally biased stretch (low complexity) spans 68–84 (GGGAASSSQSSSESLSQ). The tract at residues 68 to 106 (GGGAASSSQSSSESLSQDEPHSPQLSTRQEPQGQEHQVD) is disordered. The span at 90-102 (PQLSTRQEPQGQE) shows a compositional bias: polar residues. The residue at position 126 (Tyr126) is a Phosphotyrosine; by FGFR1. Coiled-coil stretches lie at residues 268–319 (NACS…LMKG), 362–441 (IEKL…LQAT), and 481–508 (VYTL…WEQK). The interval 589–618 (QLGALQPATADSSIISSHSTPAHTAQGKER) is disordered. The segment covering 597-611 (TADSSIISSHSTPAH) has biased composition (polar residues). The PDZ-binding signature appears at 678–681 (EIFI).

Belongs to the angiomotin family. As to quaternary structure, interacts with SRC. Phosphorylation at Tyr-126 is necessary for efficient binding to SRC and synergistically functioning with SRC to activate the downstream MAPK pathway. In terms of tissue distribution, expressed in endothelial cells.

It is found in the recycling endosome. The protein localises to the cytoplasm. Its subcellular location is the cell projection. It localises to the podosome. The protein resides in the cell junction. Functionally, required for proper architecture of actin filaments and for cell movements during embryogenesis. Plays a role in the radial actin fiber architecture in skin epithelial cells, thereby maintains cell geometry, size and cell interconnectivity within the skin. Plays an important role in coupling actin fibers to cell junctions in endothelial cells and is therefore required for correct endothelial cell morphology and maintenance of dorsal aorta lumen expansion during embryogenesis. May further play a role in the polarity, proliferation and migration of endothelial cells, and therefore participates in angiogenesis. May regulate the translocation of phosphorylated SRC to peripheral cell-matrix adhesion sites. The polypeptide is Angiomotin-like 2b (Danio rerio (Zebrafish)).